Here is a 129-residue protein sequence, read N- to C-terminus: UPF0148 protein AF_2370 (129 aa).

The segment at 61 to 80 (SAAKAESEEKPPESTKPAVK) is disordered.

The protein belongs to the UPF0148 family.

The chain is UPF0148 protein AF_2370 from Archaeoglobus fulgidus (strain ATCC 49558 / DSM 4304 / JCM 9628 / NBRC 100126 / VC-16).